The sequence spans 388 residues: bZIP transcription factor ABI5 homolog (388 aa).

Residues 1-36 form a disordered region; it reads MASEMSKNVKVTDDQEVTSQERDQSGGTKVGGEEEI. Ser44 bears the Phosphoserine mark. A bZIP domain is found at 302–365; it reads VERRQRRMIK…KQMLVEKMME (64 aa). The basic motif stretch occupies residues 304–323; sequence RRQRRMIKNRESAARSRARK. The interval 330–344 is leucine-zipper; that stretch reads LEAELNYLKQENARL. The disordered stretch occupies residues 368–388; that stretch reads KEKMNANRGGSQLRRSGSCMW.

Belongs to the bZIP family. ABI5 subfamily. As to quaternary structure, forms homodimers. Interacts with VP1. Interacts with GF14D. Interacts with PP2C51. Interacts with SAPK2. Post-translationally, phosphorylated at Ser-44 by SAPK6. Expressed in roots, leaves and panicles. Expressed in seeds.

The protein localises to the nucleus. Functionally, transcription factor that possesses transactivation activity in yeast. Involved in abscisic acid (ABA) signaling pathway. Binds to the G-box motif 5'-CACGTG-3' of TRAB1 gene promoter. Involved in the regulation of pollen maturation. May act as negative regulator of salt stress response. Together with PYL5, PP2C30 and SAPK2, is part of an ABA signaling unit that modulates seed germination and early seedling growth. This is bZIP transcription factor ABI5 homolog from Oryza sativa subsp. japonica (Rice).